The sequence spans 260 residues: ProSAAS (260 aa).

The signal sequence occupies residues 1–33; that stretch reads MAGSPLLWGPRAGGVGLLVLLLLGLFRPPPALC. A proSAAS(1-180) region spans residues 34-215; sequence ARPVKEPRGL…SADSEGVAAP (182 aa). T53 is a glycosylation site (O-linked (GalNAc...) threonine). Positions 165–188 are disordered; that stretch reads RPRPPVYDDGPAGPDAEEAGDETP. Residues 179–188 are compositionally biased toward acidic residues; sequence DAEEAGDETP. A C-terminal inhibitory domain; interacts with PCSK1 region spans residues 221 to 260; the sequence is AADHDVGSELPPEGVLGALLRVKRLETPAPQVPARRLLPP. Residue S228 is glycosylated (O-linked (GalNAc...) serine). A Sufficient for inhibition of PCSK1 motif is present at residues 239–244; it reads LLRVKR. T247 carries an O-linked (GalNAc...) threonine glycan.

Interacts via the C-terminal inhibitory domain with PCSK1 66 kDa form. Proteolytically cleaved in the Golgi. Post-translationally, O-glycosylated with a core 1 or possibly core 8 glycan. As to expression, expressed in brain and pancreas.

It is found in the secreted. The protein resides in the golgi apparatus. The protein localises to the trans-Golgi network. In terms of biological role, may function in the control of the neuroendocrine secretory pathway. Proposed be a specific endogenous inhibitor of PCSK1. ProSAAS and Big PEN-LEN, both containing the C-terminal inhibitory domain, but not the further processed peptides reduce PCSK1 activity in the endoplasmic reticulum and Golgi. It reduces the activity of the 84 kDa form but not the autocatalytically derived 66 kDa form of PCSK1. Subsequent processing of proSAAS may eliminate the inhibition. Slows down convertase-mediated processing of proopiomelanocortin and proenkephalin. May control the intracellular timing of PCSK1 rather than its total level of activity. Functionally, endogenous ligand for GPR171. Neuropeptide involved in the regulation of feeding. This is ProSAAS (PCSK1N) from Homo sapiens (Human).